Here is a 500-residue protein sequence, read N- to C-terminus: Cobyric acid synthase (500 aa).

The GATase cobBQ-type domain maps to 253–446 (KIGVAAIYFP…FHGFFDRPEV (194 aa)). Cys-334 (nucleophile) is an active-site residue. The active site involves His-438.

This sequence belongs to the CobB/CobQ family. CobQ subfamily.

Its pathway is cofactor biosynthesis; adenosylcobalamin biosynthesis. Functionally, catalyzes amidations at positions B, D, E, and G on adenosylcobyrinic A,C-diamide. NH(2) groups are provided by glutamine, and one molecule of ATP is hydrogenolyzed for each amidation. The polypeptide is Cobyric acid synthase (Chlorobaculum tepidum (strain ATCC 49652 / DSM 12025 / NBRC 103806 / TLS) (Chlorobium tepidum)).